Consider the following 124-residue polypeptide: Fluoride-specific ion channel FluC (124 aa).

4 consecutive transmembrane segments (helical) span residues 4-24 (VLFV…ISLL), 35-55 (FGTL…FALG), 62-82 (PEFK…FSTF), and 95-115 (LVKA…VVYL). Residues Gly-74 and Thr-77 each coordinate Na(+).

Belongs to the fluoride channel Fluc/FEX (TC 1.A.43) family.

The protein resides in the cell inner membrane. The enzyme catalyses fluoride(in) = fluoride(out). Its activity is regulated as follows. Na(+) is not transported, but it plays an essential structural role and its presence is essential for fluoride channel function. Fluoride-specific ion channel. Important for reducing fluoride concentration in the cell, thus reducing its toxicity. The sequence is that of Fluoride-specific ion channel FluC from Shewanella pealeana (strain ATCC 700345 / ANG-SQ1).